The sequence spans 382 residues: Pre-mRNA-splicing factor SLU7 (382 aa).

Residues 1–15 (MNNNSRNNENRSTIN) are compositionally biased toward low complexity. The disordered stretch occupies residues 1 to 72 (MNNNSRNNEN…TAEGGEKSDY (72 aa)). Over residues 46–58 (DTPKEQEGKKPGN) the composition is skewed to basic and acidic residues. Phosphoserine is present on Ser-120. The CCHC-type zinc-finger motif lies at 120-137 (SFCRNCGEAGHKEKDCME). The interaction with PRP8 stretch occupies residues 200–224 (KDKSQTDETLWDTDEEIELMKLELY). Thr-212 is subject to Phosphothreonine. Residues 362-382 (RKVDGTKQSEEQRNHLKDLYG) are disordered.

Belongs to the SLU7 family. Belongs to the CWC complex (or CEF1-associated complex), a spliceosome sub-complex reminiscent of a late-stage spliceosome composed of the U2, U5 and U6 snRNAs and at least BUD13, BUD31, BRR2, CDC40, CEF1, CLF1, CUS1, CWC2, CWC15, CWC21, CWC22, CWC23, CWC24, CWC25, CWC27, ECM2, HSH155, IST3, ISY1, LEA1, MSL1, NTC20, PRP8, PRP9, PRP11, PRP19, PRP21, PRP22, PRP45, PRP46, SLU7, SMB1, SMD1, SMD2, SMD3, SMX2, SMX3, SNT309, SNU114, SPP2, SYF1, SYF2, RSE1 and YJU2. Interacts with BRR2, ECM2, PRP18 and PRP22. Post-translationally, N-glycosylated.

The protein resides in the nucleus. Its function is as follows. Essential protein involved in the second catalytic step of pre-mRNA splicing. Involved in the selection of 3'-type splice sites; this selection could be done via a 3'-splice site-binding factor, PRP16. The protein is Pre-mRNA-splicing factor SLU7 (SLU7) of Saccharomyces cerevisiae (strain ATCC 204508 / S288c) (Baker's yeast).